The chain runs to 412 residues: D-amino acid dehydrogenase 3 (412 aa).

4–18 provides a ligand contact to FAD; it reads IVVIGAGIAGVSTAY.

The protein belongs to the DadA oxidoreductase family. It depends on FAD as a cofactor.

It carries out the reaction a D-alpha-amino acid + A + H2O = a 2-oxocarboxylate + AH2 + NH4(+). Oxidative deamination of D-amino acids. The protein is D-amino acid dehydrogenase 3 (dadA3) of Mesorhizobium japonicum (strain LMG 29417 / CECT 9101 / MAFF 303099) (Mesorhizobium loti (strain MAFF 303099)).